The chain runs to 588 residues: Ufm1-specific protease (588 aa).

Residues Cys-420, Asp-544, and His-546 contribute to the active site.

This sequence belongs to the peptidase C78 family. Interacts with odr-4.

The protein resides in the endoplasmic reticulum membrane. It is found in the cytoplasm. The protein localises to the perinuclear region. In terms of biological role, thiol protease which recognizes and hydrolyzes the peptide bond at the C-terminal Gly of ufm-1, a ubiquitin-like modifier protein bound to a number of target proteins. Required, with oct-4, for the localization of a subset of 7 transmembrane domain odorant receptors, including odr-10, to the cilia of olfactory neurons AWA and AWC. Operates in aggregation behavior, and responses to oxygen levels. The protein is Ufm1-specific protease of Caenorhabditis briggsae.